A 354-amino-acid polypeptide reads, in one-letter code: MGVLDIVKAGVISGDELNKVYDYAKAEGFAIPAVNVVGTDSINAVLEAAKKVNSPVIIQFSNGGAKFYAGKNCPNGEVLGAISGAKHVHLLAKAYGVPVILHTDHAARKLLPWIDGLIEANAQYKKTHGQALFSSHMLDLSEESLEENLSTCEVYLQKLDALGVALEIELGCTGGEEDGVDNTGIDNSKLYTQPEDVALAYERLGKISDKFSIAASFGNVHGVYKPGNVSLQPEILKNSQKFVKDKFALNSDKPINFVFHGGSGSELKDIKNAVSYGVIKMNIDTDTQWAFWDGVREYELKNRAYLQGQIGNPEGDDKPNKKYYDPRVWLRSGEESMIKRLEIAFEDLNCINKN.

Residue serine 61 participates in D-glyceraldehyde 3-phosphate binding. The active-site Proton donor is the aspartate 104. Positions 105, 139, 169, and 221 each coordinate Zn(2+). Residue glycine 222 coordinates dihydroxyacetone phosphate. Histidine 260 is a binding site for Zn(2+). Dihydroxyacetone phosphate contacts are provided by residues 261-263 (GGS) and 282-285 (NIDT).

It belongs to the class II fructose-bisphosphate aldolase family. In terms of assembly, homodimer. The cofactor is Zn(2+).

It catalyses the reaction beta-D-fructose 1,6-bisphosphate = D-glyceraldehyde 3-phosphate + dihydroxyacetone phosphate. The protein operates within carbohydrate degradation; glycolysis; D-glyceraldehyde 3-phosphate and glycerone phosphate from D-glucose: step 4/4. Functionally, catalyzes the aldol condensation of dihydroxyacetone phosphate (DHAP or glycerone-phosphate) with glyceraldehyde 3-phosphate (G3P) to form fructose 1,6-bisphosphate (FBP) in gluconeogenesis and the reverse reaction in glycolysis. The chain is Fructose-bisphosphate aldolase (fba) from Campylobacter jejuni subsp. jejuni serotype O:23/36 (strain 81-176).